The chain runs to 328 residues: MSKAPMRVAITGAAGQIGYSLLFRIASGEMLGKDQPVILQLLDLPQAQQAVKGVMMELEDCAFPLLAGMVATDDPNVAFKDADVCLLVGARPRTKGMERADLLTANGAIFTVQGKAIAENAKEDVKVLVVGNPCNTNAFIAAAAAKKVGRTNPNNYHGMLRLDHNRALSQLAGKTGRAVSSLKKLVVWGNHSPTMYADYRFCTSNGDSVKALVNDHAWNNDVFLPTVGKRGAAIIEARGLSSAASAANAAIDHVRDWVLGSDEWVTMGVPSDGSYGIPAGIVFGFPCECKGGKFSIIQGLEIDEYSREKINFTLKELTDEAEAVKDML.

Position 12–18 (12–18 (GAAGQIG)) interacts with NAD(+). Arginine 93 and arginine 99 together coordinate substrate. Residues asparagine 106, glutamine 113, and 130 to 132 (VGN) each bind NAD(+). Residues asparagine 132 and arginine 166 each coordinate substrate. Histidine 191 serves as the catalytic Proton acceptor.

It belongs to the LDH/MDH superfamily. MDH type 2 family.

The enzyme catalyses (S)-malate + NAD(+) = oxaloacetate + NADH + H(+). Its function is as follows. Catalyzes the reversible oxidation of malate to oxaloacetate. This is Malate dehydrogenase from Dechloromonas aromatica (strain RCB).